The chain runs to 386 residues: Succinate--CoA ligase [ADP-forming] subunit beta (386 aa).

One can recognise an ATP-grasp domain in the interval 9 to 244 (KEVLRKYGVV…LDEEDADEIE (236 aa)). Residues Lys-46, 53-55 (GRG), Glu-99, Ala-102, and Glu-107 each bind ATP. Mg(2+) contacts are provided by Asn-199 and Asp-213. Residues Asn-264 and 321–323 (GIM) contribute to the substrate site.

The protein belongs to the succinate/malate CoA ligase beta subunit family. In terms of assembly, heterotetramer of two alpha and two beta subunits. The cofactor is Mg(2+).

The catalysed reaction is succinate + ATP + CoA = succinyl-CoA + ADP + phosphate. The enzyme catalyses GTP + succinate + CoA = succinyl-CoA + GDP + phosphate. The protein operates within carbohydrate metabolism; tricarboxylic acid cycle; succinate from succinyl-CoA (ligase route): step 1/1. Succinyl-CoA synthetase functions in the citric acid cycle (TCA), coupling the hydrolysis of succinyl-CoA to the synthesis of either ATP or GTP and thus represents the only step of substrate-level phosphorylation in the TCA. The beta subunit provides nucleotide specificity of the enzyme and binds the substrate succinate, while the binding sites for coenzyme A and phosphate are found in the alpha subunit. This Azoarcus sp. (strain BH72) protein is Succinate--CoA ligase [ADP-forming] subunit beta.